The following is a 356-amino-acid chain: Septin-12 (356 aa).

A disordered region spans residues 1-23; the sequence is MDERRTPSPCSSRPSSPRTPPCE. The segment covering 7 to 16 has biased composition (low complexity); sequence PSPCSSRPSS. The Septin-type G domain occupies 44–315; the sequence is TGFEFNIMVV…ENYRVLRLNE (272 aa). An interaction with SEPTIN7 region spans residues 44-317; sequence TGFEFNIMVV…YRVLRLNESH (274 aa). A G1 motif region spans residues 54-61; it reads GQSGLGKS. Residues 54 to 61, Thr87, Gly113, 193 to 201, Gly249, and Arg264 each bind GTP; these read GQSGLGKS and RADSLTIEE. The tract at residues 110 to 113 is G3 motif; that stretch reads DTPG. A G4 motif region spans residues 192–195; the sequence is ARAD. A self-association (via N-terminus) to polymerize octameric septin 12-7-6-2/4-2/4-6-7-12 filaments region spans residues 256–356; sequence VNGRCVLGRK…RSKDPRDDEC (101 aa). The segment at 330–356 is disordered; it reads PASPGQLMAPGPEKVRKRSKDPRDDEC.

It belongs to the TRAFAC class TrmE-Era-EngA-EngB-Septin-like GTPase superfamily. Septin GTPase family. As to quaternary structure, septins polymerize into heterooligomeric protein complexes that form filaments, and can associate with cellular membranes, actin filaments and microtubules. GTPase activity is required for filament formation. Interacts with SEPTIN6 and SEPTIN11. Self-associates. Component of a octameric complex consisting of SEPTIN12, SEPTIN7, SEPTIN6 and SEPTIN2 or SEPTIN4 in the order 12-7-6-2-2-6-7-12 or 12-7-6-4-4-6-7-12 and located in the sperm annulus; the octamer polymerizes into filaments via the SEPTIN12 N- and C-termini; the SEPTIN12:SEPTIN7 association is mediated by the GTP-binding domains. Interacts with SPAG4 and LMNB1. Associates with alpha- and beta-tubulins. Predominantly expressed in testis and epididymis. Component of the sperm tail annulus (at protein level).

Its subcellular location is the cytoplasm. The protein resides in the cytoskeleton. The protein localises to the spindle. It is found in the cell projection. It localises to the cilium. Its subcellular location is the flagellum. In terms of biological role, filament-forming cytoskeletal GTPase. May play a role in cytokinesis (Potential). Involved in spermatogenesis. Involved in the morphogenesis of sperm heads and the elongation of sperm tails probably implicating the association with alpha- and beta-tubulins. Forms a filamentous structure with SEPTIN7, SEPTIN6, SEPTIN2 and probably SEPTIN4 at the sperm annulus which is required for the structural integrity and motility of the sperm tail during postmeiotic differentiation. The chain is Septin-12 from Rattus norvegicus (Rat).